We begin with the raw amino-acid sequence, 394 residues long: Elongation factor Tu (394 aa).

Residues 10 to 204 (KPHVNIGTIG…AVDSYIPQPV (195 aa)) enclose the tr-type G domain. The interval 19–26 (GHVDHGKT) is G1. 19–26 (GHVDHGKT) is a binding site for GTP. Residue Thr26 participates in Mg(2+) binding. The segment at 60-64 (GITIS) is G2. A G3 region spans residues 81–84 (DCPG). GTP contacts are provided by residues 81–85 (DCPGH) and 136–139 (NKVD). The interval 136–139 (NKVD) is G4. A G5 region spans residues 174–176 (SAL).

The protein belongs to the TRAFAC class translation factor GTPase superfamily. Classic translation factor GTPase family. EF-Tu/EF-1A subfamily. As to quaternary structure, monomer.

The protein localises to the cytoplasm. It carries out the reaction GTP + H2O = GDP + phosphate + H(+). Functionally, GTP hydrolase that promotes the GTP-dependent binding of aminoacyl-tRNA to the A-site of ribosomes during protein biosynthesis. This is Elongation factor Tu from Rickettsia parkeri.